The sequence spans 94 residues: Co-chaperonin GroES (94 aa).

Belongs to the GroES chaperonin family. In terms of assembly, heptamer of 7 subunits arranged in a ring. Interacts with the chaperonin GroEL.

The protein resides in the cytoplasm. Together with the chaperonin GroEL, plays an essential role in assisting protein folding. The GroEL-GroES system forms a nano-cage that allows encapsulation of the non-native substrate proteins and provides a physical environment optimized to promote and accelerate protein folding. GroES binds to the apical surface of the GroEL ring, thereby capping the opening of the GroEL channel. The sequence is that of Co-chaperonin GroES from Bacillus pumilus (strain SAFR-032).